A 458-amino-acid chain; its full sequence is MTREEKQLFGTDGIRGRANYEPMTVELSVLLGKAVAGVLQERKPGKHRVVVGKDTRLSGYMFENALVAGLTSMGIETLVLGPIPTPGVAFITRAYRADAGIMISASHNPYWDNGIKIFSSEGFKISDVIERRIEQMVACRDFGNFPEDYAVGKNKRVVDAMGRYIEFAKATFPKGRTLKGLKIVLDCAHGAAYKVAPSVFEELDAEVICYGCEPTGSNINDNCGALFPSVIQKAVIEHKADVGIALDGDGDRIIMVNEKGHIVDGDMILSICASDLKKKALLNGNRVVATVMTNFGVLKYLESLGIETLISSVGDRHVLQNMLEHEANLGGEQSGHMIFLDYNTTGDGIVSALQVLRIMIESESTLSDLTSLIVKSPQALINVSVKEKIPLDTLPIVQEALRDVRSSLGDSGRVLLRYSGTENICRVMVEGLKKHQVDSLAKTIADIVDSELGAGIIE.

The active-site Phosphoserine intermediate is the Ser-106. Mg(2+)-binding residues include Ser-106, Asp-247, Asp-249, and Asp-251. The residue at position 106 (Ser-106) is a Phosphoserine.

Belongs to the phosphohexose mutase family. Requires Mg(2+) as cofactor. Activated by phosphorylation.

It carries out the reaction alpha-D-glucosamine 1-phosphate = D-glucosamine 6-phosphate. In terms of biological role, catalyzes the conversion of glucosamine-6-phosphate to glucosamine-1-phosphate. The chain is Phosphoglucosamine mutase from Chlamydia caviae (strain ATCC VR-813 / DSM 19441 / 03DC25 / GPIC) (Chlamydophila caviae).